The chain runs to 159 residues: Phosphopantetheine adenylyltransferase (159 aa).

Serine 9 contributes to the substrate binding site. Residues 9-10 (SF) and histidine 17 contribute to the ATP site. Lysine 41, leucine 73, and lysine 87 together coordinate substrate. Residues 88-90 (GLR), glutamate 98, and 123-129 (YSYLSSS) each bind ATP.

The protein belongs to the bacterial CoaD family. In terms of assembly, homohexamer. It depends on Mg(2+) as a cofactor.

The protein resides in the cytoplasm. The catalysed reaction is (R)-4'-phosphopantetheine + ATP + H(+) = 3'-dephospho-CoA + diphosphate. It functions in the pathway cofactor biosynthesis; coenzyme A biosynthesis; CoA from (R)-pantothenate: step 4/5. In terms of biological role, reversibly transfers an adenylyl group from ATP to 4'-phosphopantetheine, yielding dephospho-CoA (dPCoA) and pyrophosphate. The chain is Phosphopantetheine adenylyltransferase from Clostridium botulinum (strain Alaska E43 / Type E3).